The chain runs to 561 residues: Glucose-6-phosphate isomerase (561 aa).

D-glucose 6-phosphate is bound by residues 171-172 (GS), 222-227 (SKTFTT), Gln-366, Glu-370, His-401, and Lys-525. Glu-370 functions as the Proton donor in the catalytic mechanism. Catalysis depends on residues His-401 and Lys-525.

The protein belongs to the GPI family. Homodimer.

It localises to the cytoplasm. It is found in the cytosol. The enzyme catalyses alpha-D-glucose 6-phosphate = beta-D-fructose 6-phosphate. It functions in the pathway carbohydrate degradation; glycolysis; D-glyceraldehyde 3-phosphate and glycerone phosphate from D-glucose: step 2/4. In the cytoplasm, catalyzes the conversion of glucose-6-phosphate to fructose-6-phosphate, the second step in glycolysis, and the reverse reaction during gluconeogenesis. The sequence is that of Glucose-6-phosphate isomerase (pgi-1) from Neurospora crassa (strain ATCC 24698 / 74-OR23-1A / CBS 708.71 / DSM 1257 / FGSC 987).